A 175-amino-acid chain; its full sequence is Granulocyte colony-stimulating factor (175 aa).

Cystine bridges form between cysteine 37/cysteine 43 and cysteine 65/cysteine 75. Threonine 134 carries an O-linked (GalNAc...) threonine glycan.

The protein belongs to the IL-6 superfamily. In terms of assembly, monomer. Post-translationally, O-glycosylated.

Its subcellular location is the secreted. Functionally, granulocyte/macrophage colony-stimulating factors are cytokines that act in hematopoiesis by controlling the production, differentiation, and function of 2 related white cell populations of the blood, the granulocytes and the monocytes-macrophages. This CSF induces granulocytes. The polypeptide is Granulocyte colony-stimulating factor (CSF3) (Canis lupus familiaris (Dog)).